Consider the following 245-residue polypeptide: Thiopurine S-methyltransferase (245 aa).

29–40 (WQDKWVSHKIGF) is an S-adenosyl-L-methionine binding site. Residue Phe40 participates in substrate binding. The residue at position 58 (Lys58) is an N6-acetyllysine. S-adenosyl-L-methionine is bound by residues Leu69, Glu90, 134 to 135 (SI), and Arg152.

This sequence belongs to the class I-like SAM-binding methyltransferase superfamily. TPMT family. As to quaternary structure, monomer.

It is found in the cytoplasm. The catalysed reaction is S-adenosyl-L-methionine + a thiopurine = S-adenosyl-L-homocysteine + a thiopurine S-methylether.. The chain is Thiopurine S-methyltransferase (TPMT) from Oryctolagus cuniculus (Rabbit).